The sequence spans 525 residues: GMP synthase [glutamine-hydrolyzing] (525 aa).

Residues 8–206 (PLLILDFGSQ…VVDICKASTD (199 aa)) enclose the Glutamine amidotransferase type-1 domain. The active-site Nucleophile is Cys85. Active-site residues include His180 and Glu182. Residues 207 to 400 (WTPEHIIDEA…LGLPHDMVYR (194 aa)) enclose the GMPS ATP-PPase domain. ATP is bound at residue 234–240 (SGGVDSS).

As to quaternary structure, homodimer.

The catalysed reaction is XMP + L-glutamine + ATP + H2O = GMP + L-glutamate + AMP + diphosphate + 2 H(+). It functions in the pathway purine metabolism; GMP biosynthesis; GMP from XMP (L-Gln route): step 1/1. In terms of biological role, catalyzes the synthesis of GMP from XMP. This is GMP synthase [glutamine-hydrolyzing] from Legionella pneumophila (strain Lens).